A 443-amino-acid polypeptide reads, in one-letter code: Glutamate-1-semialdehyde 2,1-aminomutase (443 aa).

Residues 1 to 16 are compositionally biased toward low complexity; that stretch reads MSVNADSQHSNNSSHQ. Residues 1–22 are disordered; sequence MSVNADSQHSNNSSHQASEKAF. An N6-(pyridoxal phosphate)lysine modification is found at K277.

It belongs to the class-III pyridoxal-phosphate-dependent aminotransferase family. HemL subfamily. As to quaternary structure, homodimer. Pyridoxal 5'-phosphate serves as cofactor.

It is found in the cytoplasm. It carries out the reaction (S)-4-amino-5-oxopentanoate = 5-aminolevulinate. It functions in the pathway porphyrin-containing compound metabolism; protoporphyrin-IX biosynthesis; 5-aminolevulinate from L-glutamyl-tRNA(Glu): step 2/2. The polypeptide is Glutamate-1-semialdehyde 2,1-aminomutase (Corynebacterium jeikeium (strain K411)).